The sequence spans 261 residues: Serine acetyltransferase (261 aa).

This sequence belongs to the transferase hexapeptide repeat family.

It is found in the cytoplasm. The catalysed reaction is L-serine + acetyl-CoA = O-acetyl-L-serine + CoA. It functions in the pathway amino-acid biosynthesis; L-cysteine biosynthesis; L-cysteine from L-serine: step 1/2. The chain is Serine acetyltransferase (cysE) from Buchnera aphidicola subsp. Schizaphis graminum (strain Sg).